The chain runs to 159 residues: RNA pyrophosphohydrolase (159 aa).

A Nudix hydrolase domain is found at 6 to 149 (GFRPNVGIIL…KREVYRRALK (144 aa)). The Nudix box motif lies at 38–59 (GGINDRESPEEALYRELNEEVG).

It belongs to the Nudix hydrolase family. RppH subfamily. Requires a divalent metal cation as cofactor.

Functionally, accelerates the degradation of transcripts by removing pyrophosphate from the 5'-end of triphosphorylated RNA, leading to a more labile monophosphorylated state that can stimulate subsequent ribonuclease cleavage. The sequence is that of RNA pyrophosphohydrolase from Ectopseudomonas mendocina (strain ymp) (Pseudomonas mendocina).